A 202-amino-acid chain; its full sequence is Phosphoenolpyruvate guanylyltransferase (202 aa).

Thr140, Gly156, and Ser159 together coordinate phosphoenolpyruvate.

Belongs to the CofC family.

It catalyses the reaction phosphoenolpyruvate + GTP + H(+) = enolpyruvoyl-2-diphospho-5'-guanosine + diphosphate. The protein operates within cofactor biosynthesis; coenzyme F420 biosynthesis. Functionally, guanylyltransferase that catalyzes the activation of phosphoenolpyruvate (PEP) as enolpyruvoyl-2-diphospho-5'-guanosine, via the condensation of PEP with GTP. It is involved in the biosynthesis of coenzyme F420, a hydride carrier cofactor. This is Phosphoenolpyruvate guanylyltransferase from Chloroflexus aggregans (strain MD-66 / DSM 9485).